Consider the following 365-residue polypeptide: Elongation factor Tu (365 aa).

GTP contacts are provided by residues 1–7 (HVDHGKT), 62–66 (DCPGH), and 117–120 (NKCD). One can recognise a tr-type G domain in the interval 1–185 (HVDHGKTTLT…ILDTYIPEPK (185 aa)). Mg(2+) is bound at residue Thr-7.

Belongs to the TRAFAC class translation factor GTPase superfamily. Classic translation factor GTPase family. EF-Tu/EF-1A subfamily. As to quaternary structure, monomer.

The protein localises to the cytoplasm. The enzyme catalyses GTP + H2O = GDP + phosphate + H(+). Its function is as follows. GTP hydrolase that promotes the GTP-dependent binding of aminoacyl-tRNA to the A-site of ribosomes during protein biosynthesis. The sequence is that of Elongation factor Tu from Buchnera aphidicola subsp. Melaphis rhois.